A 529-amino-acid polypeptide reads, in one-letter code: Bifunctional purine biosynthesis protein PurH (529 aa).

The region spanning 1–148 (MQQRRPVRRA…KNHKDVAIVV (148 aa)) is the MGS-like domain.

This sequence belongs to the PurH family.

It catalyses the reaction (6R)-10-formyltetrahydrofolate + 5-amino-1-(5-phospho-beta-D-ribosyl)imidazole-4-carboxamide = 5-formamido-1-(5-phospho-D-ribosyl)imidazole-4-carboxamide + (6S)-5,6,7,8-tetrahydrofolate. It carries out the reaction IMP + H2O = 5-formamido-1-(5-phospho-D-ribosyl)imidazole-4-carboxamide. Its pathway is purine metabolism; IMP biosynthesis via de novo pathway; 5-formamido-1-(5-phospho-D-ribosyl)imidazole-4-carboxamide from 5-amino-1-(5-phospho-D-ribosyl)imidazole-4-carboxamide (10-formyl THF route): step 1/1. The protein operates within purine metabolism; IMP biosynthesis via de novo pathway; IMP from 5-formamido-1-(5-phospho-D-ribosyl)imidazole-4-carboxamide: step 1/1. This chain is Bifunctional purine biosynthesis protein PurH, found in Salmonella paratyphi C (strain RKS4594).